A 159-amino-acid polypeptide reads, in one-letter code: Phosphopantetheine adenylyltransferase (159 aa).

Thr10 lines the substrate pocket. Residues Thr10–Phe11 and His18 each bind ATP. The substrate site is built by Lys42, Met74, and Arg88. ATP contacts are provided by residues Gly89 to Arg91, Glu99, and Trp124 to Ser130.

It belongs to the bacterial CoaD family. In terms of assembly, homohexamer. Mg(2+) serves as cofactor.

Its subcellular location is the cytoplasm. It catalyses the reaction (R)-4'-phosphopantetheine + ATP + H(+) = 3'-dephospho-CoA + diphosphate. It functions in the pathway cofactor biosynthesis; coenzyme A biosynthesis; CoA from (R)-pantothenate: step 4/5. Its function is as follows. Reversibly transfers an adenylyl group from ATP to 4'-phosphopantetheine, yielding dephospho-CoA (dPCoA) and pyrophosphate. The polypeptide is Phosphopantetheine adenylyltransferase (Klebsiella pneumoniae subsp. pneumoniae (strain ATCC 700721 / MGH 78578)).